A 603-amino-acid polypeptide reads, in one-letter code: Serine/threonine-protein kinase PLK1 (603 aa).

Low complexity predominate over residues methionine 1–alanine 15. The interval methionine 1 to glycine 32 is disordered. Residue lysine 19 forms a Glycyl lysine isopeptide (Lys-Gly) (interchain with G-Cter in ubiquitin) linkage. One can recognise a Protein kinase domain in the interval tyrosine 53–phenylalanine 305. ATP-binding positions include leucine 59–cysteine 67 and lysine 82. Serine 103 carries the phosphoserine modification. Position 131 (glutamate 131) interacts with ATP. Position 137 is a phosphoserine (serine 137). The Proton acceptor role is filled by aspartate 176. Residues lysine 178 to asparagine 181 and aspartate 194 each bind ATP. Residues aspartate 194–glutamate 221 form an activation loop region. Phosphothreonine; by AURKA is present on threonine 210. Position 214 is a phosphothreonine (threonine 214). Phosphoserine; by autocatalysis occurs at positions 269 and 335. A D-box that targets the protein for proteasomal degradation in anaphase motif is present at residues arginine 337–leucine 340. A Glycyl lysine isopeptide (Lys-Gly) (interchain with G-Cter in SUMO2) cross-link involves residue lysine 338. The tract at residues lysine 338 to proline 361 is disordered. Residues leucine 351 to proline 361 are compositionally biased toward basic and acidic residues. 2 positions are modified to phosphoserine: serine 375 and serine 450. A POLO box 1 domain is found at tryptophan 410–glutamate 488. Residue lysine 492 forms a Glycyl lysine isopeptide (Lys-Gly) (interchain with G-Cter in ubiquitin) linkage. The interval alanine 493–arginine 507 is linker. At threonine 498 the chain carries Phosphothreonine. In terms of domain architecture, POLO box 2 spans tyrosine 510–serine 592. Residues histidine 538 to lysine 540 are important for interaction with phosphorylated proteins.

It belongs to the protein kinase superfamily. Ser/Thr protein kinase family. CDC5/Polo subfamily. As to quaternary structure, interacts with CEP170 and EVI5. Interacts and phosphorylates ERCC6L. Interacts with FAM29A. Interacts with SLX4/BTBD12 and TTDN1. Interacts with BUB1B. Interacts (via POLO-box domain) with the phosphorylated form of BUB1, CENPU and CDC25C. Interacts with isoform 3 of SGO1. Interacts with BORA, KIF2A and AURKA. Interacts with TOPORS and CYLD. Interacts with ECT2; the interaction is stimulated upon phosphorylation of ECT2 on 'Thr-444'. Interacts with PRC1. Interacts with KIF20A/MKLP2 (when phosphorylated), leading to the recruitment at the central spindle. Interacts (via POLO box domains) with PPP1R12A/MYPT1 (when previously phosphorylated by CDK1). Part of an astrin (SPAG5)-kinastrin (SKAP) complex containing KNSTRN, SPAG5, PLK1, DYNLL1 and SGO2. Interacts with BIRC6/bruce. Interacts with CDK1-phosphorylated FRY; this interaction occurs in mitotic cells, but not in interphase cells. FRY interaction facilitates AURKA-mediated PLK1 phosphorylation. Interacts with CDK1-phosphorylated DCTN6 during mitotic prometaphase; the interaction facilitates recruitment to kinetochores. Interacts with CEP68; the interaction phosphorylates CEP68. Interacts (via POLO-box domain) with DCTN1. Interacts with CEP20 in later G1, S, G2 and M phases of the cell cycle; this interaction recruits PLK1 to centrosomes, a step required for S phase progression. Interacts with HSF1; this interaction increases upon heat shock but does not modulate neither HSF1 homotrimerization nor DNA-binding activities. Interacts with HNRNPU; this interaction induces phosphorylation of HNRNPU in mitosis. Interacts (via its N-terminus) with RIOK2. Interacts with KLHL22. Interacts (via POLO box domains) with NEDD9/HEF1 (via C-terminus). Interacts (via RVxF motif) with FIRRM; regulates PLK1 kinase activity. Interacts with SKA3; the interaction promotes the stability of PLK1. Interacts with the MTMR3:MTMR4 heterooligomer; brings CEP55 and PLK1 together during early mitosis, regulating the phosphorylation of CEP55 by PLK1 and its recruitment to the midbody where it can mediate cell abscission. Post-translationally, catalytic activity is enhanced by phosphorylation of Thr-210. Phosphorylation at Thr-210 is first detected on centrosomes in the G2 phase of the cell cycle, peaks in prometaphase and gradually disappears from centrosomes during anaphase. Dephosphorylation at Thr-210 at centrosomes is probably mediated by protein phosphatase 1C (PP1C), via interaction with PPP1R12A/MYPT1. Autophosphorylation and phosphorylation of Ser-137 may not be significant for the activation of PLK1 during mitosis, but may enhance catalytic activity during recovery after DNA damage checkpoint. Phosphorylated in vitro by STK10. In terms of processing, ubiquitinated by the anaphase promoting complex/cyclosome (APC/C) in anaphase and following DNA damage, leading to its degradation by the proteasome. Ubiquitination is mediated via its interaction with FZR1/CDH1. Ubiquitination and subsequent degradation prevents entry into mitosis and is essential to maintain an efficient G2 DNA damage checkpoint. Monoubiquitination at Lys-492 by the BCR(KLHL22) ubiquitin ligase complex does not lead to degradation: it promotes PLK1 dissociation from phosphoreceptor proteins and subsequent removal from kinetochores, allowing silencing of the spindle assembly checkpoint (SAC) and chromosome segregation.

Its subcellular location is the nucleus. It localises to the chromosome. The protein localises to the centromere. The protein resides in the kinetochore. It is found in the cytoplasm. Its subcellular location is the cytoskeleton. It localises to the microtubule organizing center. The protein localises to the centrosome. The protein resides in the spindle. It is found in the midbody. It carries out the reaction L-seryl-[protein] + ATP = O-phospho-L-seryl-[protein] + ADP + H(+). The enzyme catalyses L-threonyl-[protein] + ATP = O-phospho-L-threonyl-[protein] + ADP + H(+). Its activity is regulated as follows. Activated by phosphorylation of Thr-210 by AURKA; phosphorylation by AURKA is enhanced by BORA. Once activated, activity is stimulated by binding target proteins. Binding of target proteins has no effect on the non-activated kinase. Several inhibitors targeting PLKs are currently in development and are under investigation in a growing number of clinical trials, such as BI 2536, an ATP-competitive PLK1 inhibitor or BI 6727, a dihydropteridinone that specifically inhibits the catalytic activity of PLK1. Serine/threonine-protein kinase that performs several important functions throughout M phase of the cell cycle, including the regulation of centrosome maturation and spindle assembly, the removal of cohesins from chromosome arms, the inactivation of anaphase-promoting complex/cyclosome (APC/C) inhibitors, and the regulation of mitotic exit and cytokinesis. Polo-like kinase proteins act by binding and phosphorylating proteins that are already phosphorylated on a specific motif recognized by the POLO box domains. Phosphorylates BORA, BUB1B/BUBR1, CCNB1, CDC25C, CEP55, ECT2, ERCC6L, FBXO5/EMI1, FOXM1, KIF20A/MKLP2, CENPU, NEDD1, NINL, NPM1, NUDC, PKMYT1/MYT1, KIZ, PPP1R12A/MYPT1, PRC1, RACGAP1/CYK4, RHNO1, SGO1, STAG2/SA2, TEX14, TOPORS, p73/TP73, TPT1, WEE1 and HNRNPU. Plays a key role in centrosome functions and the assembly of bipolar spindles by phosphorylating KIZ, NEDD1 and NINL. NEDD1 phosphorylation promotes subsequent targeting of the gamma-tubulin ring complex (gTuRC) to the centrosome, an important step for spindle formation. Phosphorylation of NINL component of the centrosome leads to NINL dissociation from other centrosomal proteins. Involved in mitosis exit and cytokinesis by phosphorylating CEP55, ECT2, KIF20A/MKLP2, CENPU, PRC1 and RACGAP1. Recruited at the central spindle by phosphorylating and docking PRC1 and KIF20A/MKLP2; creates its own docking sites on PRC1 and KIF20A/MKLP2 by mediating phosphorylation of sites subsequently recognized by the POLO box domains. Phosphorylates RACGAP1, thereby creating a docking site for the Rho GTP exchange factor ECT2 that is essential for the cleavage furrow formation. Promotes the central spindle recruitment of ECT2. Plays a central role in G2/M transition of mitotic cell cycle by phosphorylating CCNB1, CDC25C, FOXM1, CENPU, PKMYT1/MYT1, PPP1R12A/MYPT1 and WEE1. Part of a regulatory circuit that promotes the activation of CDK1 by phosphorylating the positive regulator CDC25C and inhibiting the negative regulators WEE1 and PKMYT1/MYT1. Also acts by mediating phosphorylation of cyclin-B1 (CCNB1) on centrosomes in prophase. Phosphorylates FOXM1, a key mitotic transcription regulator, leading to enhance FOXM1 transcriptional activity. Involved in kinetochore functions and sister chromatid cohesion by phosphorylating BUB1B/BUBR1, FBXO5/EMI1 and STAG2/SA2. PLK1 is high on non-attached kinetochores suggesting a role of PLK1 in kinetochore attachment or in spindle assembly checkpoint (SAC) regulation. Required for kinetochore localization of BUB1B. Regulates the dissociation of cohesin from chromosomes by phosphorylating cohesin subunits such as STAG2/SA2. Phosphorylates SGO1: required for spindle pole localization of isoform 3 of SGO1 and plays a role in regulating its centriole cohesion function. Mediates phosphorylation of FBXO5/EMI1, a negative regulator of the APC/C complex during prophase, leading to FBXO5/EMI1 ubiquitination and degradation by the proteasome. Acts as a negative regulator of p53 family members: phosphorylates TOPORS, leading to inhibit the sumoylation of p53/TP53 and simultaneously enhance the ubiquitination and subsequent degradation of p53/TP53. Phosphorylates the transactivation domain of the transcription factor p73/TP73, leading to inhibit p73/TP73-mediated transcriptional activation and pro-apoptotic functions. Phosphorylates BORA, and thereby promotes the degradation of BORA. Contributes to the regulation of AURKA function. Also required for recovery after DNA damage checkpoint and entry into mitosis. Phosphorylates MISP, leading to stabilization of cortical and astral microtubule attachments required for proper spindle positioning. Together with MEIKIN, acts as a regulator of kinetochore function during meiosis I: required both for mono-orientation of kinetochores on sister chromosomes and protection of centromeric cohesin from separase-mediated cleavage. Phosphorylates CEP68 and is required for its degradation. Regulates nuclear envelope breakdown during prophase by phosphorylating DCTN1 resulting in its localization in the nuclear envelope. Phosphorylates the heat shock transcription factor HSF1, promoting HSF1 nuclear translocation upon heat shock. Phosphorylates HSF1 also in the early mitotic period; this phosphorylation regulates HSF1 localization to the spindle pole, the recruitment of the SCF(BTRC) ubiquitin ligase complex induicing HSF1 degradation, and hence mitotic progression. Regulates mitotic progression by phosphorylating RIOK2. Through the phosphorylation of DZIP1 regulates the localization during mitosis of the BBSome, a ciliary protein complex involved in cilium biogenesis. Regulates DNA repair during mitosis by mediating phosphorylation of POLQ and RHNO1, thereby promoting POLQ recruitment to DNA damage sites. Phosphorylates ATXN10 which may play a role in the regulation of cytokinesis and may stimulate the proteasome-mediated degradation of ATXN10. The protein is Serine/threonine-protein kinase PLK1 (Plk1) of Rattus norvegicus (Rat).